The sequence spans 438 residues: Gamma-glutamyl phosphate reductase (438 aa).

This sequence belongs to the gamma-glutamyl phosphate reductase family.

Its subcellular location is the cytoplasm. It carries out the reaction L-glutamate 5-semialdehyde + phosphate + NADP(+) = L-glutamyl 5-phosphate + NADPH + H(+). It functions in the pathway amino-acid biosynthesis; L-proline biosynthesis; L-glutamate 5-semialdehyde from L-glutamate: step 2/2. In terms of biological role, catalyzes the NADPH-dependent reduction of L-glutamate 5-phosphate into L-glutamate 5-semialdehyde and phosphate. The product spontaneously undergoes cyclization to form 1-pyrroline-5-carboxylate. The chain is Gamma-glutamyl phosphate reductase from Prochlorococcus marinus (strain NATL2A).